We begin with the raw amino-acid sequence, 620 residues long: Glutathione-regulated potassium-efflux system protein KefC (620 aa).

The next 12 membrane-spanning stretches (helical) occupy residues 4–24, 26–46, 54–74, 90–110, 114–134, 149–169, 178–198, 218–238, 270–290, 294–314, 327–347, and 359–379; these read HTLL…PIAV, LGLG…PWGL, SILH…GLEL, GALQ…FLGL, VAEL…MQAM, FAVL…IPLL, LGAF…VVLL, VFSA…EEVG, GLLL…GTLV, LRIL…LWLV, WFAV…GAAQ, and ALTL…VLLT. An RCK N-terminal domain is found at 399–518; sequence QPRVIVAGFG…AGVAMPERET (120 aa). The interval 599-620 is disordered; it reads QGTAEGKHSGEAADEPEVKPSI.

It belongs to the monovalent cation:proton antiporter 2 (CPA2) transporter (TC 2.A.37) family. KefC subfamily. Homodimer. Interacts with the regulatory subunit KefF.

Its subcellular location is the cell inner membrane. Functionally, pore-forming subunit of a potassium efflux system that confers protection against electrophiles. Catalyzes K(+)/H(+) antiport. This is Glutathione-regulated potassium-efflux system protein KefC from Salmonella schwarzengrund (strain CVM19633).